The following is a 154-amino-acid chain: MVKAVATVRGDSKISGTVTFEQSEENSPTTITWNITGNDANAERGMHVHQFGDNTNGCTSAGPHFNPHGQTHGAPTDEVRHVGDLGNFKTDAQGNATGSVQDSHIKLIGPLSVIGRTVVVHSGTDDLGKGENEESKKTGNAGTRPACGVIGIAA.

Cu cation is bound by residues His47, His49, and His64. A disulfide bridge links Cys58 with Cys147. 4 residues coordinate Zn(2+): His64, His72, His81, and Asp84. Cu cation is bound at residue His121. A compositionally biased stretch (basic and acidic residues) spans 124–137 (TDDLGKGENEESKK). Residues 124-144 (TDDLGKGENEESKKTGNAGTR) are disordered. Arg144 serves as a coordination point for substrate.

This sequence belongs to the Cu-Zn superoxide dismutase family. In terms of assembly, homodimer. Requires Cu cation as cofactor. Zn(2+) serves as cofactor.

The protein resides in the cytoplasm. It carries out the reaction 2 superoxide + 2 H(+) = H2O2 + O2. Its function is as follows. Destroys radicals which are normally produced within the cells and which are toxic to biological systems. In Botryotinia fuckeliana (Noble rot fungus), this protein is Superoxide dismutase [Cu-Zn] (sod1).